Here is a 694-residue protein sequence, read N- to C-terminus: MAREYKIEDYRNFGIMAHIDAGKTTMTERILFYTGKNHKIGETHDGASTMDWMEQEQERGITITSAATTTFWQGRDGKKRRFNIIDTPGHVDFTIEVERSLRVLDGAIALLDANAGVEPQTETVWRQAEKYHVPRMVFVNKMDKIGADFYRSVEMVGSRLGAVALPVQLPIGAENDFVGVVDLIEMKALTWDGTIGAPATVGEIPADMADKAEEYREKLIELAVEIDEAAMEAYLEGTMPTNDELRALIRKGTIEVKFHPILCGTAFKNRGVQPLLDAVVEFLPAPTDVPAIKGIDVKTETETTRESSDEAPLSMLAFKIMNDPFVGSLTFARIYSGKLTKGVSLENTVKGKRERIGRMLQMHSNSREDIDEAFAGDIVALAGLKETTTGDTLCDPLKPVILERMEFPDPVIEIAIEPKTKADQEKMGIALNRLAAEDPSFRVKSDEESGQTIIAGMGELHLDILVDRMKREFKVEANVGAPQVAYRESITRAAEIDYTHKKQSGGSGQFARVKIIFEPHDGDDFIFESKIVGGSVPKEYIPGVQKGIESVMGAGPLAGFPMLGVKATLIDGTYHDVDSSVLAFEIASRAAFREGAQKAGAQLLEPIMKVEVVTPEDYVGDVIGDLNSRRGQISGTEARGIATVVNAMVPLANMFGYVNSLRSMSQGRAQYTMQFDHYEPVPTAVAQEIQKKFA.

Residues 8–287 (EDYRNFGIMA…AVVEFLPAPT (280 aa)) form the tr-type G domain. Residues 17-24 (AHIDAGKT), 86-90 (DTPGH), and 140-143 (NKMD) contribute to the GTP site.

The protein belongs to the TRAFAC class translation factor GTPase superfamily. Classic translation factor GTPase family. EF-G/EF-2 subfamily.

It is found in the cytoplasm. In terms of biological role, catalyzes the GTP-dependent ribosomal translocation step during translation elongation. During this step, the ribosome changes from the pre-translocational (PRE) to the post-translocational (POST) state as the newly formed A-site-bound peptidyl-tRNA and P-site-bound deacylated tRNA move to the P and E sites, respectively. Catalyzes the coordinated movement of the two tRNA molecules, the mRNA and conformational changes in the ribosome. This is Elongation factor G from Brucella melitensis biotype 2 (strain ATCC 23457).